The following is a 290-amino-acid chain: ATP synthase gamma chain (290 aa).

This sequence belongs to the ATPase gamma chain family. F-type ATPases have 2 components, CF(1) - the catalytic core - and CF(0) - the membrane proton channel. CF(1) has five subunits: alpha(3), beta(3), gamma(1), delta(1), epsilon(1). CF(0) has three main subunits: a, b and c.

Its subcellular location is the cell membrane. Its function is as follows. Produces ATP from ADP in the presence of a proton gradient across the membrane. The gamma chain is believed to be important in regulating ATPase activity and the flow of protons through the CF(0) complex. The chain is ATP synthase gamma chain from Listeria welshimeri serovar 6b (strain ATCC 35897 / DSM 20650 / CCUG 15529 / CIP 8149 / NCTC 11857 / SLCC 5334 / V8).